The primary structure comprises 161 residues: Photosystem II extrinsic protein V (161 aa).

The signal sequence occupies residues 1 to 25 (MKKFFISVVFIVLLTFTTFINSATA). Cys61, Cys64, His65, and His116 together coordinate heme c.

The protein belongs to the cytochrome c family. PsbV subfamily. PSII is composed of 1 copy each of membrane proteins PsbA, PsbB, PsbC, PsbD, PsbE, PsbF, PsbH, PsbI, PsbJ, PsbK, PsbL, PsbM, PsbT, PsbX, PsbY, PsbZ, Psb30/Ycf12, peripheral proteins PsbO, CyanoQ (PsbQ), PsbU, PsbV and a large number of cofactors. It forms dimeric complexes. Heme c serves as cofactor.

Its subcellular location is the cellular thylakoid membrane. Functionally, one of the extrinsic, lumenal subunits of photosystem II (PSII). PSII is a light-driven water plastoquinone oxidoreductase, using light energy to abstract electrons from H(2)O, generating a proton gradient subsequently used for ATP formation. The extrinsic proteins stabilize the structure of photosystem II oxygen-evolving complex (OEC), the ion environment of oxygen evolution and protect the OEC against heat-induced inactivation. Low-potential cytochrome c that plays a role in the OEC of PSII. This chain is Photosystem II extrinsic protein V, found in Trichodesmium erythraeum (strain IMS101).